Here is a 252-residue protein sequence, read N- to C-terminus: 5'-nucleotidase SurE (252 aa).

4 residues coordinate a divalent metal cation: Asp-8, Asp-9, Ser-39, and Asn-95.

It belongs to the SurE nucleotidase family. A divalent metal cation serves as cofactor.

The protein localises to the cytoplasm. It carries out the reaction a ribonucleoside 5'-phosphate + H2O = a ribonucleoside + phosphate. Its function is as follows. Nucleotidase that shows phosphatase activity on nucleoside 5'-monophosphates. This Clostridium botulinum (strain ATCC 19397 / Type A) protein is 5'-nucleotidase SurE.